The primary structure comprises 212 residues: Probable U3 small nucleolar RNA-associated protein 11 (212 aa).

It belongs to the UTP11 family. In terms of assembly, component of the ribosomal small subunit (SSU) processome.

The protein localises to the nucleus. It localises to the nucleolus. In terms of biological role, involved in nucleolar processing of pre-18S ribosomal RNA. The chain is Probable U3 small nucleolar RNA-associated protein 11 from Plasmodium falciparum (isolate 3D7).